A 466-amino-acid chain; its full sequence is MKRQLKLFFIVLITAVVASALTLFITGNSSILGQKSASTGDSKFDKLNKAYEQIKSDYYQKTDDDKLVDGAIKGMIQSLDDPYSTYMDQEQAKSFDETISASFEGIGAQVEEKDGEILIVSPIKGSPAEKAGIKPRDQIIKVNGKSVKGMNVNEAVALIRGKKGTKVKLELNRAGVGNIDLSIKRDTIPVETVYSEMKDNNIGEIQITSFSETTAKELTDAIDSLEKKGAKGYILDLRGNPGGLMEQAITMSNLFIDKGKNIMQVEYKNGSKEVMKAEKERKVTKPTVVLVNDGTASAAEIMAAALHESSNVPLIGETTFGKGTVQTAKEYDDGSTVKLTVAKWLTADGEWIHKKGIKPQVKAELPDYAKLPYLDADKTYKSGDTGTNVKVAQKMLKALGYKVKVNSMYDQDFVSVVKQFQKKEKLNETGILTGDTTTKLMIELQKKLSDNDTQMEKAIETLKKEM.

Residues 1 to 36 (MKRQLKLFFIVLITAVVASALTLFITGNSSILGQKS) form the signal peptide. The PDZ domain maps to 96 to 174 (DETISASFEG…TKVKLELNRA (79 aa)). Catalysis depends on charge relay system residues Ser297, Glu308, and Lys322.

Belongs to the peptidase S41A family.

The catalysed reaction is The enzyme shows specific recognition of a C-terminal tripeptide, Xaa-Yaa-Zaa, in which Xaa is preferably Ala or Leu, Yaa is preferably Ala or Tyr, and Zaa is preferably Ala, but then cleaves at a variable distance from the C-terminus. A typical cleavage is -Ala-Ala-|-Arg-Ala-Ala-Lys-Glu-Asn-Tyr-Ala-Leu-Ala-Ala.. The polypeptide is Carboxy-terminal processing protease CtpA (ctpA) (Bacillus subtilis (strain 168)).